A 306-amino-acid polypeptide reads, in one-letter code: Probable zinc metalloprotease VDBG_06923 (306 aa).

Positions 1–28 are cleaved as a signal peptide; the sequence is MNYEAEQPGANDDASGVAVALELARVLA. Residues Asp12 and Glu45 each coordinate Zn(2+). A glycan (N-linked (GlcNAc...) asparagine) is linked at Asn60. Asp72 is a Zn(2+) binding site. Positions 218–306 constitute a Fibronectin type-III domain; sequence APAKVNNVRV…KSPVTIPFPT (89 aa). Residues Asn228, Asn234, and Asn244 are each glycosylated (N-linked (GlcNAc...) asparagine).

It belongs to the peptidase M28 family. M28B subfamily. It depends on Zn(2+) as a cofactor.

The protein localises to the secreted. This is Probable zinc metalloprotease VDBG_06923 from Verticillium alfalfae (strain VaMs.102 / ATCC MYA-4576 / FGSC 10136) (Verticillium wilt of alfalfa).